The sequence spans 252 residues: Eukaryotic translation initiation factor 3 subunit K (252 aa).

Positions 46–225 (FDCYANLALL…VKVPTNKENE (180 aa)) constitute a PCI domain.

Belongs to the eIF-3 subunit K family. Component of the eukaryotic translation initiation factor 3 (eIF-3) complex.

The protein resides in the cytoplasm. Its function is as follows. Component of the eukaryotic translation initiation factor 3 (eIF-3) complex, which is involved in protein synthesis of a specialized repertoire of mRNAs and, together with other initiation factors, stimulates binding of mRNA and methionyl-tRNAi to the 40S ribosome. The eIF-3 complex specifically targets and initiates translation of a subset of mRNAs involved in cell proliferation. This is Eukaryotic translation initiation factor 3 subunit K from Aspergillus terreus (strain NIH 2624 / FGSC A1156).